Here is a 487-residue protein sequence, read N- to C-terminus: b(0,+)-type amino acid transporter 1 (487 aa).

A compositionally biased stretch (basic and acidic residues) spans 1–15 (MGDTGLRKRREDEKS). The segment at 1–22 (MGDTGLRKRREDEKSIQSQEPK) is disordered. The Cytoplasmic segment spans residues 1–31 (MGDTGLRKRREDEKSIQSQEPKTTSLQKELG). At S18 the chain carries Phosphoserine. The chain crosses the membrane as a helical span at residues 32–55 (LISGISIIVGTIIGSGIFVSPKSV). 43-47 (IIGSG) contacts L-arginine. The Extracellular portion of the chain corresponds to 56 to 62 (LSNTEAV). Residues 63 to 84 (GPCLIIWAACGVLATLGALCFA) form a helical membrane-spanning segment. Residues 85-110 (ELGTMITKSGGEYPYLMEAYGPIPAY) lie on the Cytoplasmic side of the membrane. Residues 111 to 137 (LFSWASLIVIKPTSFAIICLSFSEYVC) form a helical membrane-spanning segment. Residues 138-147 (APFYVGCKPP) are Extracellular-facing. Helical transmembrane passes span 148-169 (QIVVKCLAAAAILFISTVNSLS) and 170-193 (VRLGSYVQNIFTAAKLVIVAIIII). The Extracellular segment spans residues 194 to 217 (SGLVLLAQGNTKNFDNSFEGAQLS). The helical transmembrane segment at 218–238 (VGAISLAFYNGLWAYDGWNQL) threads the bilayer. D233 contacts L-arginine. The Cytoplasmic segment spans residues 239-251 (NYITEELRNPYRN). The helical transmembrane segment at 252 to 274 (LPLAIIIGIPLVTACYILMNVSY) threads the bilayer. Topologically, residues 275–302 (FTVMTATELLQSQAVAVTFGDRVLYPAS) are extracellular. The helical transmembrane segment at 303-325 (WIVPLFVAFSTIGAANGTCFTAG) threads the bilayer. Topologically, residues 326 to 351 (RLIYVAGREGHMLKVLSYISVRRLTP) are cytoplasmic. 2 helical membrane passes run 352-370 (APAIIFYGIIATIYIIPGD) and 371-391 (INSLVNYFSFAAWLFYGLTIL). Residues 392-410 (GLIVMRFTRKELERPIKVP) are Cytoplasmic-facing. Residues 411–431 (VVIPVLMTLISVFLVLAPIIS) form a helical membrane-spanning segment. The Extracellular segment spans residues 432-434 (KPT). Residues 435 to 450 (WEYLYCVLFILSGLLF) form a helical membrane-spanning segment. The Cytoplasmic segment spans residues 451 to 487 (YFLFVHYKFGWAQKISKPITMHLQMLMEVVPPEEDPE).

This sequence belongs to the amino acid-polyamine-organocation (APC) superfamily. In terms of assembly, disulfide-linked heterodimer composed of the catalytic light chain subunit SLC7A9 and the heavy chain subunit SLC3A1. The heterodimer is the minimal functional unit. Assembles in heterotetramers (dimers of heterodimers) and higher order oligomers; the oligomerization is mediated by SLC3A1 likely to prevent degradation and facilitate heteromer trafficking to the plasma membrane. Interacts with CAV1. In terms of tissue distribution, expressed in the brush border membrane in the kidney (at protein level). Kidney, small intestine, liver and placenta.

Its subcellular location is the apical cell membrane. It is found in the cell membrane. It carries out the reaction L-leucine(out) + L-arginine(in) = L-leucine(in) + L-arginine(out). The catalysed reaction is L-histidine(out) + L-arginine(in) = L-histidine(in) + L-arginine(out). It catalyses the reaction L-arginine(in) + L-phenylalanine(out) = L-arginine(out) + L-phenylalanine(in). The enzyme catalyses L-cysteine(out) + L-arginine(in) = L-cysteine(in) + L-arginine(out). It carries out the reaction L-cystine(out) + L-arginine(in) = L-cystine(in) + L-arginine(out). The catalysed reaction is L-lysine(out) + L-arginine(in) = L-lysine(in) + L-arginine(out). Associates with SLC3A1 to form a functional transporter complex that mediates the electrogenic exchange between cationic amino acids and neutral amino acids, with a stoichiometry of 1:1. Has system b(0,+)-like activity with high affinity for extracellular cationic amino acids and L-cystine and lower affinity for intracellular neutral amino acids. Substrate exchange is driven by high concentration of intracellular neutral amino acids and the intracellular reduction of L-cystine to L-cysteine. Required for reabsorption of L-cystine and dibasic amino acids across the brush border membrane in renal proximal tubules. This chain is b(0,+)-type amino acid transporter 1, found in Homo sapiens (Human).